Here is a 674-residue protein sequence, read N- to C-terminus: Methionine--tRNA ligase (674 aa).

The 'HIGH' region motif lies at 12–22 (PYANGPIHLGH). Residues Cys143, Cys146, Cys156, and Cys159 each coordinate Zn(2+). The 'KMSKS' region signature appears at 328–332 (KMSKS). Lys331 provides a ligand contact to ATP. Residues 573-674 (SFAKLDLRIA…EGARPGMRVK (102 aa)) form the tRNA-binding domain.

This sequence belongs to the class-I aminoacyl-tRNA synthetase family. MetG type 1 subfamily. As to quaternary structure, homodimer. Zn(2+) serves as cofactor.

The protein localises to the cytoplasm. The catalysed reaction is tRNA(Met) + L-methionine + ATP = L-methionyl-tRNA(Met) + AMP + diphosphate. Is required not only for elongation of protein synthesis but also for the initiation of all mRNA translation through initiator tRNA(fMet) aminoacylation. In Nitrosococcus oceani (strain ATCC 19707 / BCRC 17464 / JCM 30415 / NCIMB 11848 / C-107), this protein is Methionine--tRNA ligase.